The chain runs to 506 residues: Maturase K (506 aa).

The protein belongs to the intron maturase 2 family. MatK subfamily.

The protein resides in the plastid. It is found in the chloroplast. In terms of biological role, usually encoded in the trnK tRNA gene intron. Probably assists in splicing its own and other chloroplast group II introns. This chain is Maturase K, found in Gaultheria procumbens (Wintergreen).